Here is a 129-residue protein sequence, read N- to C-terminus: MSNNYETLYILRPDLGEEVVQQQVERYRTLITEHSATDIQVKVWGKKRLAYPIKKLNDGVYVQMNYQASGKQVAPMERAMRLSDEVIRYLTLKLDRVVAPPADLSPLTEIPPSPITEAVVEDDGISAED.

The protein belongs to the bacterial ribosomal protein bS6 family.

In terms of biological role, binds together with bS18 to 16S ribosomal RNA. The protein is Small ribosomal subunit protein bS6 of Microcystis aeruginosa (strain NIES-843 / IAM M-2473).